The primary structure comprises 587 residues: Cyclic GMP-AMP synthase-like receptor (587 aa).

Disordered stretches follow at residues 26-48 (IHPS…RRDD) and 77-229 (TRMH…DRPL). Composition is skewed to basic and acidic residues over residues 95 to 138 (TRDR…RDSL), 150 to 185 (DGAR…RESL), and 204 to 228 (PESR…HDRP). E307, D309, and D409 together coordinate Mg(2+).

The protein belongs to the mab-21 family. Mg(2+) is required as a cofactor. The cofactor is Mn(2+).

It catalyses the reaction UTP + ATP = 2',3'-cUAMP + 2 diphosphate. Nucleotidyltransferase that catalyzes the formation of cyclic UMP-AMP (2',3'-cUAMP) from ATP and UTP and plays a key role in innate immunity. Acts as a key sensor of double-stranded DNA (dsDNA), the presence of dsDNA in the cytoplasm being a danger signal that triggers the immune responses. Directly binds dsDNA, activating the nucleotidyltransferase activity, leading to synthesis of 2',3'-cUAMP, a second messenger that binds to and activates Sting, thereby triggering the immune response via activation of the NF-kappa-B transcription factor. The protein is Cyclic GMP-AMP synthase-like receptor of Magallana gigas (Pacific oyster).